Reading from the N-terminus, the 294-residue chain is N-acetylmuramic acid 6-phosphate etherase (294 aa).

The 164-residue stretch at 54 to 217 (VIQSFEEEGR…STASMIGVGK (164 aa)) folds into the SIS domain. Catalysis depends on glutamate 82, which acts as the Proton donor. Glutamate 113 is an active-site residue.

Belongs to the GCKR-like family. MurNAc-6-P etherase subfamily. In terms of assembly, homodimer.

It catalyses the reaction N-acetyl-D-muramate 6-phosphate + H2O = N-acetyl-D-glucosamine 6-phosphate + (R)-lactate. The protein operates within amino-sugar metabolism; N-acetylmuramate degradation. Its function is as follows. Specifically catalyzes the cleavage of the D-lactyl ether substituent of MurNAc 6-phosphate, producing GlcNAc 6-phosphate and D-lactate. The polypeptide is N-acetylmuramic acid 6-phosphate etherase (Bacillus cereus (strain ZK / E33L)).